The chain runs to 428 residues: Metal tolerance protein 10 (428 aa).

At 1–140 (MPLNSYIFFL…EMKKLAKSER (140 aa)) the chain is on the cytoplasmic side. A helical transmembrane segment spans residues 141–161 (LAVHISNATNLVLFVAKVYAS). Over 162–167 (MESRSM) the chain is Vacuolar. The chain crosses the membrane as a helical span at residues 168–188 (AVIASTLDSLLDLLSGFILWF). Residues 189–209 (TANAMRKPNQFHYPIGKRRMQ) lie on the Cytoplasmic side of the membrane. The chain crosses the membrane as a helical span at residues 210–230 (PVGIIVFASVMATLGLQVLLE). Topologically, residues 231–248 (SGRQLVAKSGIHMNSTEE) are vacuolar. The helical transmembrane segment at 249–269 (KWMIGIMVSVTIVKFLLMLYC) threads the bilayer. Residues 270–287 (RGFQNEIVRAYAQDHLFD) lie on the Cytoplasmic side of the membrane. Residues 288–308 (VVTNSIGLATAVLAVKFYWWI) form a helical membrane-spanning segment. Residues 309 to 311 (DPT) lie on the Vacuolar side of the membrane. A helical membrane pass occupies residues 312–332 (GAILIALYTIATWARTVLENV). At 333–428 (HSLIGRSAPP…FTHRPEHKCN (96 aa)) the chain is on the cytoplasmic side.

This sequence belongs to the cation diffusion facilitator (CDF) transporter (TC 2.A.4) family. SLC30A subfamily.

The protein localises to the vacuole membrane. Its function is as follows. Involved in sequestration of excess metal in the cytoplasm into vacuoles to maintain metal homeostasis. The protein is Metal tolerance protein 10 (MTP10) of Arabidopsis thaliana (Mouse-ear cress).